We begin with the raw amino-acid sequence, 376 residues long: DNA-directed RNA polymerase subunit alpha (376 aa).

Positions 1 to 259 (MSDNSQNLLY…KHFSIFEKMD (259 aa)) are alpha N-terminal domain (alpha-NTD). Residues 276-376 (KDDILHKLVL…EKIRSKNVKG (101 aa)) form an alpha C-terminal domain (alpha-CTD) region.

It belongs to the RNA polymerase alpha chain family. Homodimer. The RNAP catalytic core consists of 2 alpha, 1 beta, 1 beta' and 1 omega subunit. When a sigma factor is associated with the core the holoenzyme is formed, which can initiate transcription.

It carries out the reaction RNA(n) + a ribonucleoside 5'-triphosphate = RNA(n+1) + diphosphate. DNA-dependent RNA polymerase catalyzes the transcription of DNA into RNA using the four ribonucleoside triphosphates as substrates. This is DNA-directed RNA polymerase subunit alpha from Chlamydia felis (strain Fe/C-56) (Chlamydophila felis).